Reading from the N-terminus, the 340-residue chain is Phosphoribosylformylglycinamidine cyclo-ligase (340 aa).

The protein belongs to the AIR synthase family.

The protein resides in the cytoplasm. The catalysed reaction is 2-formamido-N(1)-(5-O-phospho-beta-D-ribosyl)acetamidine + ATP = 5-amino-1-(5-phospho-beta-D-ribosyl)imidazole + ADP + phosphate + H(+). It participates in purine metabolism; IMP biosynthesis via de novo pathway; 5-amino-1-(5-phospho-D-ribosyl)imidazole from N(2)-formyl-N(1)-(5-phospho-D-ribosyl)glycinamide: step 2/2. This Streptococcus pyogenes serotype M3 (strain ATCC BAA-595 / MGAS315) protein is Phosphoribosylformylglycinamidine cyclo-ligase.